The chain runs to 943 residues: Serine/threonine-protein kinase ATG1 (943 aa).

Residues 22 to 327 (FVIDKEIGKG…FEDFFHHPVI (306 aa)) enclose the Protein kinase domain. ATP is bound by residues 28–36 (IGKGSFAQV) and Lys-51. The Proton acceptor role is filled by Asp-165. Disordered stretches follow at residues 334 to 468 (LVED…LTDE), 503 to 561 (QQGQ…SPGA), 774 to 800 (LPEE…GGQA), 858 to 888 (HLPK…SDDK), and 914 to 943 (AASK…SVPT). Positions 338-352 (DIPKPEKPVLAETKS) are enriched in basic and acidic residues. Positions 517-529 (ATQQGHPTSTTGA) are enriched in polar residues. The segment covering 542-554 (RNDHYRKASHDKT) has biased composition (basic and acidic residues). Positions 919–928 (QQQQQQQQVV) are enriched in low complexity.

Belongs to the protein kinase superfamily. Ser/Thr protein kinase family. APG1/unc-51/ULK1 subfamily. As to quaternary structure, homodimer. Forms a ternary complex with ATG13 and ATG17.

The protein resides in the cytoplasm. It is found in the preautophagosomal structure membrane. The enzyme catalyses L-seryl-[protein] + ATP = O-phospho-L-seryl-[protein] + ADP + H(+). The catalysed reaction is L-threonyl-[protein] + ATP = O-phospho-L-threonyl-[protein] + ADP + H(+). Functionally, serine/threonine protein kinase involved in the cytoplasm to vacuole transport (Cvt) and found to be essential in autophagy, where it is required for the formation of autophagosomes. Involved in the clearance of protein aggregates which cannot be efficiently cleared by the proteasome. Required for selective autophagic degradation of the nucleus (nucleophagy) as well as for mitophagy which contributes to regulate mitochondrial quantity and quality by eliminating the mitochondria to a basal level to fulfill cellular energy requirements and preventing excess ROS production. Also involved in endoplasmic reticulum-specific autophagic process, in selective removal of ER-associated degradation (ERAD) substrates. Plays a key role in ATG9 and ATG23 cycling through the pre-autophagosomal structure and is necessary to promote ATG18 binding to ATG9 through phosphorylation of ATG9. Catalyzes phosphorylation of ATG4, decreasing the interaction between ATG4 and ATG8 and impairing deconjugation of PE-conjugated forms of ATG8. The protein is Serine/threonine-protein kinase ATG1 of Chaetomium globosum (strain ATCC 6205 / CBS 148.51 / DSM 1962 / NBRC 6347 / NRRL 1970) (Soil fungus).